The sequence spans 325 residues: D site-binding protein (325 aa).

Disordered regions lie at residues 1-100, 124-198, and 212-255; these read MARP…PGLL, LEHG…DPDT, and LALS…EQKD. Positions 17-28 are enriched in gly residues; it reads GPTGAPPGGGAL. Composition is skewed to low complexity over residues 29 to 38 and 71 to 80; these read LGLRSLLQGT and AGPADASAGA. Residue serine 86 is modified to Phosphoserine. The span at 88-100 shows a compositional bias: low complexity; that stretch reads RGRPGAAPGPGLL. The segment covering 129–153 has biased composition (pro residues); that stretch reads PPSPPPPGGPSPAPSPVRTPAPSPR. The segment covering 166–176 has biased composition (low complexity); that stretch reads PGHAPARAALG. Basic and acidic residues predominate over residues 221–236; that stretch reads ETFDPRRHRFSEEELK. The region spanning 255 to 318 is the bZIP domain; that stretch reads DEKYWSRRYK…SHYRAVLSRY (64 aa). Positions 257–279 are basic motif; it reads KYWSRRYKNNEAAKRSRDARRLK. Residues 283-297 form a leucine-zipper region; that stretch reads ISVRAAFLEKENALL.

The protein belongs to the bZIP family. PAR subfamily. In terms of assembly, binds DNA as a homodimer or a heterodimer. Can form a heterodimer with TEF.

The protein resides in the nucleus. Functionally, this transcriptional activator recognizes and binds to the sequence 5'-RTTAYGTAAY-3' found in the promoter of genes such as albumin, CYP2A4 and CYP2A5. It is not essential for circadian rhythm generation, but modulates important clock output genes. May be a direct target for regulation by the circadian pacemaker component clock. May affect circadian period and sleep regulation. The protein is D site-binding protein (DBP) of Bos taurus (Bovine).